The sequence spans 614 residues: MGKIIGIDLGTTNSCVAVMEGGEPTVIANSEGARTTPSVVSFQANGERLVGQVAKRQAITNPDKTVISIKRHMGTGYKVDIDGKQYSPQEISAMVLQKIKADAESYLGETVTQAVITVPAYFNDSQRQATKDAGKIAGLEVLRIINEPTAASLAYGLDKTDSAHKILVYDLGGGTFDVSILDLGDGVFEVLSTNGDTKLGGDDFDEKIMKYIADEFKASNGIDLMQDKMAVQRLKEASEKAKIELSASQQTNINLPFITADATGPKHIDLTLSRAKFNEITHDLVERSIEPMRKALADAKLSLNDIDKIILVGGSTRIPAVVEAVKNFTGKEPSKGVNPDECVAVGAAIQAGVLTGEVKDVVLLDVTPLTLGIETAGGIATPLIERNTTIPTKKSQVFSTAADNQTSVEINVVQGERQMAMDNKSLGQFTLSGIAPAPRGIPQIEVTFDIDANGIVKVSALDKGTGKEANITITASTNLSDDEVDKAVKEAEKFAEEDKKRKEKVEAVNNADQTIYQIEKTLNEVGDKATEDEKAAVRAKIEDLKKVKDGDDVEATKAAIEAVNQSFYPIATKMYQQAGGAEGAADPNAAAGGAQSAPHDDNVVDADFKVDEDK.

Phosphothreonine; by autocatalysis is present on Thr-175. The interval 577 to 614 (QAGGAEGAADPNAAAGGAQSAPHDDNVVDADFKVDEDK) is disordered. Positions 583–597 (GAADPNAAAGGAQSA) are enriched in low complexity. The span at 598-614 (PHDDNVVDADFKVDEDK) shows a compositional bias: basic and acidic residues.

This sequence belongs to the heat shock protein 70 family.

In terms of biological role, acts as a chaperone. This chain is Chaperone protein DnaK, found in Clostridium beijerinckii (strain ATCC 51743 / NCIMB 8052) (Clostridium acetobutylicum).